Reading from the N-terminus, the 203-residue chain is Ras-related protein Rab-30 (203 aa).

GTP contacts are provided by valine 20, glycine 21, lysine 22, threonine 23, cysteine 24, and threonine 41. Threonine 23 lines the Mg(2+) pocket. The interval 36-44 is switch-I; that stretch reads PGQGATIGV. Threonine 41 and aspartate 64 together coordinate Mg(2+). GTP contacts are provided by glycine 67, asparagine 122, lysine 123, aspartate 125, alanine 153, and lysine 154. A switch-II region spans residues 67-83; that stretch reads GQERFRSITQSYYRSAN. S-geranylgeranyl cysteine attachment occurs at residues cysteine 199 and cysteine 200. Cysteine 200 is subject to Cysteine methyl ester. Positions 201–203 are cleaved as a propeptide — removed in mature form; the sequence is NFN.

The protein belongs to the small GTPase superfamily. Rab family. Mg(2+) is required as a cofactor.

The protein localises to the membrane. It is found in the golgi apparatus. Its subcellular location is the trans-Golgi network membrane. It localises to the cis-Golgi network membrane. The protein resides in the golgi apparatus membrane. The protein localises to the cytoplasm. It is found in the cytoplasmic vesicle. Its subcellular location is the autophagosome membrane. It localises to the autolysosome membrane. The enzyme catalyses GTP + H2O = GDP + phosphate + H(+). Regulated by guanine nucleotide exchange factors (GEFs) which promote the exchange of bound GDP for free GTP. Regulated by GTPase activating proteins (GAPs) which increase the GTP hydrolysis activity. Inhibited by GDP dissociation inhibitors (GDIs). Functionally, the small GTPases Rab are key regulators of intracellular membrane trafficking, from the formation of transport vesicles to their fusion with membranes. Rabs cycle between an inactive GDP-bound form and an active GTP-bound form that is able to recruit to membranes different sets of downstream effectors directly responsible for vesicle formation, movement, tethering and fusion. RAB30 is required for maintaining the structural integrity of the Golgi apparatus, possibly by mediating interactions with cytoplasmic scaffolding proteins. Facilitates lipid homeostasis during fasting by regulating hepatic protein and lipid trafficking in a PPAR-alpha-dependent manner. Promotes autophagosome biogenesis during bacterial infection such as group A Streptococcus infection. The polypeptide is Ras-related protein Rab-30 (RAB30) (Bos taurus (Bovine)).